The primary structure comprises 416 residues: Multifunctional CCA protein (416 aa).

ATP contacts are provided by glycine 8 and arginine 11. The CTP site is built by glycine 8 and arginine 11. Residues aspartate 21 and aspartate 23 each contribute to the Mg(2+) site. Arginine 91, arginine 137, and arginine 140 together coordinate ATP. CTP contacts are provided by arginine 91, arginine 137, and arginine 140. The HD domain maps to 228-329 (TGVHTLMVLA…VKIFDKADFW (102 aa)).

This sequence belongs to the tRNA nucleotidyltransferase/poly(A) polymerase family. Bacterial CCA-adding enzyme type 1 subfamily. In terms of assembly, monomer. Can also form homodimers and oligomers. It depends on Mg(2+) as a cofactor. The cofactor is Ni(2+).

It catalyses the reaction a tRNA precursor + 2 CTP + ATP = a tRNA with a 3' CCA end + 3 diphosphate. It carries out the reaction a tRNA with a 3' CCA end + 2 CTP + ATP = a tRNA with a 3' CCACCA end + 3 diphosphate. Its function is as follows. Catalyzes the addition and repair of the essential 3'-terminal CCA sequence in tRNAs without using a nucleic acid template. Adds these three nucleotides in the order of C, C, and A to the tRNA nucleotide-73, using CTP and ATP as substrates and producing inorganic pyrophosphate. tRNA 3'-terminal CCA addition is required both for tRNA processing and repair. Also involved in tRNA surveillance by mediating tandem CCA addition to generate a CCACCA at the 3' terminus of unstable tRNAs. While stable tRNAs receive only 3'-terminal CCA, unstable tRNAs are marked with CCACCA and rapidly degraded. The chain is Multifunctional CCA protein from Shewanella baltica (strain OS155 / ATCC BAA-1091).